The sequence spans 212 residues: MAQTDKPTCIPPELPKMLKEFAKAAIRAQPQDLIQWGADYFEALSRGETPPVRERSERVALCNWAELTPELLKILHSQVAGRLIIRAEELAQMWKVVNLPTDLFNSVMNVGRFTEEIEWLKFLALACSALGVTITKTLKIVCEVLSCDHNGGLPRIPFSTFQFLYTYIAEVDGEICASHVSRMLNYIEQEVIGPDGLITVNDFTQNPRVWLE.

One can recognise an RIIa domain in the interval 12 to 49 (PELPKMLKEFAKAAIRAQPQDLIQWGADYFEALSRGET). Ser56 is modified (phosphoserine). Residues 209 to 212 (VWLE) are interaction with RHPN1.

It belongs to the ropporin family. As to quaternary structure, homodimer. Interacts with RHPN1. May interact with SPA17. Interacts with AKAP3. Interacts with FSCB; the interaction increases upon spermatozoa capacitation conditions. Post-translationally, sumoylated, sumoylation decreases upon spermatozoa capacitation conditions.

Its subcellular location is the cell projection. The protein localises to the cilium. It is found in the flagellum. Important for male fertility. With ROPN1L, involved in fibrous sheath integrity and sperm motility, plays a role in PKA-dependent signaling processes required for spermatozoa capacitation. This Homo sapiens (Human) protein is Ropporin-1B (ROPN1B).